The sequence spans 307 residues: Sporulation sigma-E factor-processing peptidase (307 aa).

5 helical membrane-spanning segments follow: residues 7 to 27, 36 to 56, 57 to 77, 89 to 109, and 127 to 147; these read LIWM…AVVL, LLLG…PFSH, LMVH…MTFG, LTFY…HFLF, and FGDP…SYFS. The active site involves D183.

The protein belongs to the peptidase U4 family. In terms of assembly, self-associates. Interacts with SigE. Interacts with SpoIIR.

It is found in the cell membrane. In terms of biological role, probable aspartic protease that is responsible for the proteolytic cleavage of the RNA polymerase sigma E factor (SigE/spoIIGB) to yield the active peptide in the mother cell during sporulation. Responds to a signal from the forespore that is triggered by the extracellular signal protein SpoIIR. In Priestia megaterium (strain ATCC 12872 / QMB1551) (Bacillus megaterium), this protein is Sporulation sigma-E factor-processing peptidase.